Consider the following 372-residue polypeptide: Putative 26S proteasome regulatory subunit homolog MTH_1011 (372 aa).

164–171 (GSPGTGKT) provides a ligand contact to ATP.

The protein belongs to the AAA ATPase family.

In terms of biological role, the 26S proteasome is involved in the ATP-dependent degradation of ubiquitinated proteins. The regulatory (or ATPase) complex confers ATP dependency and substrate specificity to the 26S complex. The protein is Putative 26S proteasome regulatory subunit homolog MTH_1011 of Methanothermobacter thermautotrophicus (strain ATCC 29096 / DSM 1053 / JCM 10044 / NBRC 100330 / Delta H) (Methanobacterium thermoautotrophicum).